We begin with the raw amino-acid sequence, 150 residues long: Galactose-binding lectin (150 aa).

2 residues coordinate D-galactose: H16 and G19. N-linked (GlcNAc...) asparagine glycosylation is present at N26. D-galactose contacts are provided by residues N27, 35–37 (DIH), H64, and G67. An N-linked (GlcNAc...) asparagine glycan is attached at N74. D-galactose is bound by residues E75, 83 to 85 (DRH), H108, and G111. N118 carries N-linked (GlcNAc...) asparagine glycosylation. Residues N119 and 127-129 (DKH) each bind D-galactose.

Monomer in solution. Homodimer in solution. Exists as a monomer in solution when a low concentration (0.001 mg/ml) of it is present. Homodimers start to appear at a concentration of 0.01 mg/ml and tetramers at a concentration of 0.1 mg/ml. As to expression, highly expressed in mantle and to a lesser extent in muscle, hepatopancreas, gill and hemocytes.

Its activity is regulated as follows. Bacterial binding activity is inhibited by D-galactose. Hemagglutinating activity is independent of divalent cations Ca2(+) or Mg2(+). It is strongly inhibited by N-acetyl-D-galactosamine (GalNAc), D-galactose and D-talose, and to a lesser extent by melibiose and raffinose. Also inhibited by glycoprotein asialo-bovine submaxillary mucin (BSM). Not inhibited by D-glucose, D-fucose, D-galactitol, N-acetyl-D-glucosamine or lactose. Fungal binding activity is inhibited by D-galactose. Cytotoxic activity against Raji cell line is completely inhibited by galactose, melibiose and raffinose, but not by glucose or lactose. Galactose inhibits binding to laminin and BSM, but not to collagen, gelatin or fibronectin. Its function is as follows. Galactose-binding lectin. Binds both alpha and beta anomer of galactose (Gal), but has a stronger interaction with the glycans having alpha Gal at the non-reducing end and binds beta Gal weakly only in highly branched glycans. Has high affinity to Galalpha1-4Galbeta1-4GlcNAc. Binds N-acetyl-2-deoxy-2-amino-galactose (2-deoxy-GalNAc). Binds N-acetylgalactosamine (GalNAc). Binds porcine stomach mucin (PSM) with high affinity. Binds galactosamine. Binds laminin, bovine submaxillary mucin (BSM), fibronectin, type I collagen and gelatin with a decreasing affinity, respectively. Has hemagglutinating activity towards human type A erythrocytes. Also hemagglutinates human type 0, B and AB erythrocytes as well as rabbit and mouse erythrocytes. Agglutinates both Gram-positive and Gram-negative bacteria including B.subtilis ATCC 6633, S.aureus ATCC 21027 and E.coli 3254, respectively. No agglutination activity towards Gram-positive S.amurskyense CMM 3673. Has bacteriostatic activity on S.amurskyense CMM 3673, B.subtilis ATCC 6633, S.aureus ATCC 21027 and E.coli 3254. However, has no agglutination nor bacteriostatic activity on Gram-negative C.scophthalmum CIP 104199 or A.troitsensis KMM 3674. Inhibits growth of fungi from the genera Aspergillus, Penicillium, Trichoderma and st. Mycelia. Inhibits germination of spores and hyphal growth of them. Has dose-dependent cytotoxic effect on the human globotriaosylceramide (Gb3)-expressing Burkitt's lymphoma (Raji) cell line. Binds to Gb3 in these cells leading to activation of caspase-9/3 and PARP. Has dose-dependent cytotoxic effect on the Gb3-expressing human MCF-7 breast cancer cell line. No cytotoxic effect on myelogenous leukemia K562 cell line, which does not express Gb3. Activates immune responses in mice and increases cytokine production of TNF-alpha, IL-6 and MCP-1 in the serum and the peritoneal lavage of mice. Induces TNF-alpha and IL-6 secretion in mouse RAW264.7 macrophages, mouse bone marrow-derived macrophages, human THP-1 macrophages, human peripheral blood mononuclear cells (PBMCs) and human blood monocyte-derived macrophages. TNF-alpha production in macrophages could not be inhibited by GalNAc, GalN or Gal, indicating that induced cytokine production is separate from its sugar binding activity. Increases intracellular reactive oxygen species levels, expression and phosphorylation of protein kinases PKC alpha/delta, expression of COX-2 and NF-kappaB, and activates the MAPK pathway by increasing the phosphorylation of ERK1/2, JNK1/2 and p38 in mouse RAW264.7 macrophages. Induces endotoxin tolerance in lipopolysaccharide(LPS)-activated macrophages by down-regulating IRAK2 expression, reducing JNK1/2 phosphorylation and NF-kappaB activation. Can slightly increase the bactericidal activity of RAW264.7 macrophages. Has DNA-binding activity. Recognizes pathogen-associated molecular patterns (PAMPs) and binds to LPS from E.coli, but has only little binding to beta-1,3-glucan from E.gracilis and peptidoglycan from S.aureus. Activates secretion of TNF-alpha and IFN-gamma by the human peripheral blood cells (HPBCs). May be involved in innate immunity acting as an antibacterial and antifungal agent involved in the recognition and clearance of pathogens. This is Galactose-binding lectin from Crenomytilus grayanus (Gray mussel).